Reading from the N-terminus, the 128-residue chain is Putative protein SEM1, isoform 2 (128 aa).

The span at 22-32 (KHGIKRGRRPS) shows a compositional bias: basic residues. The tract at residues 22–42 (KHGIKRGRRPSIRSPAQRARG) is disordered.

The polypeptide is Putative protein SEM1, isoform 2 (Homo sapiens (Human)).